The primary structure comprises 660 residues: DNA mismatch repair protein MutL (660 aa).

Disordered stretches follow at residues 368–426 (PQQT…PTKK) and 439–461 (NREQ…STQQ). Low complexity predominate over residues 406-417 (SSSSNSTAPSRS).

The protein belongs to the DNA mismatch repair MutL/HexB family.

This protein is involved in the repair of mismatches in DNA. It is required for dam-dependent methyl-directed DNA mismatch repair. May act as a 'molecular matchmaker', a protein that promotes the formation of a stable complex between two or more DNA-binding proteins in an ATP-dependent manner without itself being part of a final effector complex. This chain is DNA mismatch repair protein MutL, found in Aliivibrio fischeri (strain ATCC 700601 / ES114) (Vibrio fischeri).